A 597-amino-acid polypeptide reads, in one-letter code: Protein kinase C-like 3 (597 aa).

One can recognise a PB1 domain in the interval 12-95 (DIKLKTRFHG…AELNIHVFVG (84 aa)). The Phorbol-ester/DAG-type zinc-finger motif lies at 127 to 177 (GHRFQGKRLNRRIQCFICHDYIWGIGRQGFRCVDCRLCVHKKCHRHVRTHC). The segment at 181-238 (PQGPNVPVAPSSGVGSLRGGRLDTSSSTTRSGGGIDNGAFHEHEIESPGSAKDMSRST) is disordered. Positions 253-522 (FRLLTVIGRG…LNDMKEHDFF (270 aa)) constitute a Protein kinase domain. ATP contacts are provided by residues 259–267 (IGRGSYAKV) and Lys282. Asp377 functions as the Proton acceptor in the catalytic mechanism. In terms of domain architecture, AGC-kinase C-terminal spans 524–595 (GFIDWEALEQ…VNPLQMSRED (72 aa)).

It belongs to the protein kinase superfamily. AGC Ser/Thr protein kinase family. PKC subfamily. As to quaternary structure, interaction with par-3 required for the peripheral localization of par-6 and to form a par-3/par-6/pkc-3 complex, which is activated when cdc-42 interacts with par-6. Binds avidly to the phosphotyrosine interaction domain (PID) of a novel pkc-3 adapter protein num-1, which enables tethering and targeting of pkc-3 to the cell periphery. It depends on Mg(2+) as a cofactor.

Its subcellular location is the cytoplasm. It is found in the cytoskeleton. The catalysed reaction is L-seryl-[protein] + ATP = O-phospho-L-seryl-[protein] + ADP + H(+). The enzyme catalyses L-threonyl-[protein] + ATP = O-phospho-L-threonyl-[protein] + ADP + H(+). Its function is as follows. Required for the normal progression of embryogenesis and viability of the organism. Plays an indispensable role in establishing embryonic polarity and in recruiting and maintaining par-6 to the periphery, through interaction with par-3. Required for epithelial cell polarity in the distal spermatheca. Phosphorylates serine residues of num-1. Required for the expression of antimicrobial peptide nlp-29 in response in response to fungal infection or physical injury. The polypeptide is Protein kinase C-like 3 (Caenorhabditis briggsae).